The sequence spans 23 residues: Prolamin alpha-3 (23 aa).

The sequence is that of Prolamin alpha-3 from Dactylis glomerata (Orchard grass).